The sequence spans 383 residues: Xylose/arabinose import ATP-binding protein XacJ (383 aa).

In terms of domain architecture, ABC transporter spans 4–235 (IQLTDLTKRF…PNNLFVAEFI (232 aa)). 36–43 (GPSGCGKS) is a binding site for ATP.

Belongs to the ABC transporter superfamily. Carbohydrate uptake transporter-1 (CUT1) (TC 3.A.1.1) family. In terms of assembly, the complex is composed of two ATP-binding proteins (XacJ and XacK), two transmembrane proteins (XacH and XacI) and a solute-binding protein (XacG).

It is found in the cell membrane. It carries out the reaction D-xylose(out) + ATP + H2O = D-xylose(in) + ADP + phosphate + H(+). It catalyses the reaction L-arabinose(out) + ATP + H2O = L-arabinose(in) + ADP + phosphate + H(+). Functionally, part of the ABC transporter complex XacGHIJK involved in the uptake of xylose and arabinose. Responsible for energy coupling to the transport system. The polypeptide is Xylose/arabinose import ATP-binding protein XacJ (Haloferax volcanii (strain ATCC 29605 / DSM 3757 / JCM 8879 / NBRC 14742 / NCIMB 2012 / VKM B-1768 / DS2) (Halobacterium volcanii)).